The chain runs to 167 residues: Thiol peroxidase (167 aa).

The 150-residue stretch at 18–167 (VKVGDQAPDF…PIEAAKALVK (150 aa)) folds into the Thioredoxin domain. Cys-60 (cysteine sulfenic acid (-SOH) intermediate) is an active-site residue. Residues Cys-60 and Cys-94 are joined by a disulfide bond.

The protein belongs to the peroxiredoxin family. Tpx subfamily. In terms of assembly, homodimer.

The enzyme catalyses a hydroperoxide + [thioredoxin]-dithiol = an alcohol + [thioredoxin]-disulfide + H2O. Thiol-specific peroxidase that catalyzes the reduction of hydrogen peroxide and organic hydroperoxides to water and alcohols, respectively. Plays a role in cell protection against oxidative stress by detoxifying peroxides. The chain is Thiol peroxidase from Bacillus subtilis (strain 168).